The sequence spans 126 residues: Small ribosomal subunit protein bS6 (126 aa).

The interval 104–126 (LARRDRGDRPERPREDFGAQAQA) is disordered. Basic and acidic residues predominate over residues 105 to 120 (ARRDRGDRPERPREDF).

Belongs to the bacterial ribosomal protein bS6 family.

In terms of biological role, binds together with bS18 to 16S ribosomal RNA. The polypeptide is Small ribosomal subunit protein bS6 (Caulobacter vibrioides (strain ATCC 19089 / CIP 103742 / CB 15) (Caulobacter crescentus)).